A 266-amino-acid chain; its full sequence is MPIPTPYEDLLRLVFERGTPKSDRTGTGTRSLFGHQMRYDLAAGFPLITTKKVHLKSVVYELLWFLRGESNVRWLQEHGVTIWDEWASETGELGPVYGVQWRSWPTPSGGHVDQISAAVDLLRTDPDSRRNIVSAWNVGEIPQMALPPCHAFFQFYVADGRLSCQLYQRSADLFLGVPFNIASYALLTHMMAAQAGLGVGEFVWTGGDCHIYDNHVEQVTEQLSRDPRPYPELVLAQRDSIFDYTYEDVVVKNYDPHPAIKAPVAV.

Position 24 (Arg24) interacts with dUMP. A (6R)-5,10-methylene-5,6,7,8-tetrahydrofolate-binding site is contributed by His54. A dUMP-binding site is contributed by 129 to 130 (RR). The Nucleophile role is filled by Cys149. DUMP-binding positions include 169 to 172 (RSAD), Asn180, and 210 to 212 (HIY). Asp172 is a binding site for (6R)-5,10-methylene-5,6,7,8-tetrahydrofolate. (6R)-5,10-methylene-5,6,7,8-tetrahydrofolate is bound at residue Ala265.

The protein belongs to the thymidylate synthase family. Bacterial-type ThyA subfamily. In terms of assembly, homodimer.

The protein localises to the cytoplasm. The catalysed reaction is dUMP + (6R)-5,10-methylene-5,6,7,8-tetrahydrofolate = 7,8-dihydrofolate + dTMP. Its pathway is pyrimidine metabolism; dTTP biosynthesis. In terms of biological role, catalyzes the reductive methylation of 2'-deoxyuridine-5'-monophosphate (dUMP) to 2'-deoxythymidine-5'-monophosphate (dTMP) while utilizing 5,10-methylenetetrahydrofolate (mTHF) as the methyl donor and reductant in the reaction, yielding dihydrofolate (DHF) as a by-product. This enzymatic reaction provides an intracellular de novo source of dTMP, an essential precursor for DNA biosynthesis. The sequence is that of Thymidylate synthase from Mycobacterium sp. (strain KMS).